The sequence spans 346 residues: Ribosomal RNA small subunit methyltransferase H (346 aa).

S-adenosyl-L-methionine is bound by residues 46-48, D63, F90, D113, and Q120; that span reads GGY. The tract at residues 270-346 is disordered; that stretch reads GGSAGSRHMP…LPETNELARS (77 aa).

It belongs to the methyltransferase superfamily. RsmH family.

The protein resides in the cytoplasm. The catalysed reaction is cytidine(1402) in 16S rRNA + S-adenosyl-L-methionine = N(4)-methylcytidine(1402) in 16S rRNA + S-adenosyl-L-homocysteine + H(+). In terms of biological role, specifically methylates the N4 position of cytidine in position 1402 (C1402) of 16S rRNA. This Brucella abortus (strain S19) protein is Ribosomal RNA small subunit methyltransferase H.